The primary structure comprises 779 residues: MNNKILEQLEFNKVKELLLPYLKTEQSQEELLELEPMTEAPKIEKSFNEISDMEQIFVEHHSFGIVSLSSISESLKRLELSADLNIQELLAIKKVLQSSSDMIHFYSDLNNISFQSLDRLFENLEQFPNLQGSFQAINDGGFLEHFASPELERIRRQLTNSERRVRQILQDMLKEKAELLSENLIASRSGRSVLPVKNTYRNRISGVVHDISSSGTTVYIEPRAVVTLNEEITQLRADERHEEGRILHAFSDLLRPHVATIRNNAWILGHLDFVRAKYLFMSDNKATIPKISNDSTLVLINVRHPLLSNPVANDLHFDHDLTAIVITGPNTGGKTIMLKTLGLAQLMGQSGLPVLADKGSKITVFNNIFADIGDEQSIEQSLSTFSSHMTHIVSILNEADRNSLVLFDELGAGTDPQEGASLAMAILEHLRLSHIKTMATTHYPELKAYGIETNFVENASMEFDAETLSPTYRFMQGVPGRSNAFEIASRLGLAPFIVKQAKQMTDSDSDVNRIIEQLEAQTLETRRRLDHIKEVEQENLKFNRAVKKLYNEFSHERDKELEKIYQEAQEIVDMALNESDTILKKLNDKSQLKPHEIIDAKAQIKKLAPQVDLSKNKVLNKAKKIKAARAPRIGDDIIVTSYGQRGTLTSQLKDGRWEAQVGIIKMTLTQDEFSLVRVQEEQKVKNKQINVVKKADSSGPRARLDLRGKRYEEAMQELDHFIDQSLLNNMGQVDIIHGIGTGVIREGVTKYLRRHKHVKHFAYAPQNAGGSGATIVTLG.

Residue 328–335 (GPNTGGKT) participates in ATP binding. The Smr domain maps to 704-779 (LDLRGKRYEE…GSGATIVTLG (76 aa)).

The protein belongs to the DNA mismatch repair MutS family. MutS2 subfamily. In terms of assembly, homodimer. Binds to stalled ribosomes, contacting rRNA.

Endonuclease that is involved in the suppression of homologous recombination and thus may have a key role in the control of bacterial genetic diversity. Functionally, acts as a ribosome collision sensor, splitting the ribosome into its 2 subunits. Detects stalled/collided 70S ribosomes which it binds and splits by an ATP-hydrolysis driven conformational change. Acts upstream of the ribosome quality control system (RQC), a ribosome-associated complex that mediates the extraction of incompletely synthesized nascent chains from stalled ribosomes and their subsequent degradation. Probably generates substrates for RQC. The protein is Endonuclease MutS2 of Streptococcus pyogenes serotype M49 (strain NZ131).